The primary structure comprises 108 residues: Phosphoribosyl-AMP cyclohydrolase (108 aa).

Asp-78 serves as a coordination point for Mg(2+). Position 79 (Cys-79) interacts with Zn(2+). Positions 80 and 82 each coordinate Mg(2+). Cys-95 and Cys-102 together coordinate Zn(2+).

The protein belongs to the PRA-CH family. As to quaternary structure, homodimer. Mg(2+) is required as a cofactor. It depends on Zn(2+) as a cofactor.

The protein localises to the cytoplasm. The enzyme catalyses 1-(5-phospho-beta-D-ribosyl)-5'-AMP + H2O = 1-(5-phospho-beta-D-ribosyl)-5-[(5-phospho-beta-D-ribosylamino)methylideneamino]imidazole-4-carboxamide. The protein operates within amino-acid biosynthesis; L-histidine biosynthesis; L-histidine from 5-phospho-alpha-D-ribose 1-diphosphate: step 3/9. In terms of biological role, catalyzes the hydrolysis of the adenine ring of phosphoribosyl-AMP. This chain is Phosphoribosyl-AMP cyclohydrolase, found in Nitrosopumilus maritimus (strain SCM1).